The chain runs to 279 residues: Ferredoxin-type protein NapG (279 aa).

The segment at residues methionine 1 to alanine 50 is a signal peptide (tat-type signal). 4 consecutive 4Fe-4S ferredoxin-type domains span residues glutamine 63–leucine 92, threonine 100–threonine 132, leucine 141–glutamine 177, and phenylalanine 188–methionine 219. Cysteine 72, cysteine 75, cysteine 78, cysteine 82, cysteine 110, cysteine 113, cysteine 118, cysteine 122, cysteine 150, cysteine 158, cysteine 161, cysteine 165, cysteine 197, cysteine 200, cysteine 203, and cysteine 207 together coordinate [4Fe-4S] cluster.

The cofactor is [4Fe-4S] cluster. In terms of processing, predicted to be exported by the Tat system. The position of the signal peptide cleavage has not been experimentally proven.

The protein localises to the periplasm. In terms of biological role, required for electron transfer from ubiquinol, via NapC, to the periplasmic nitrate reductase NapAB complex. The protein is Ferredoxin-type protein NapG (napG) of Haemophilus influenzae (strain ATCC 51907 / DSM 11121 / KW20 / Rd).